Reading from the N-terminus, the 489-residue chain is Dihydropyrimidinase 1 (489 aa).

Residues His-61, His-63, and Lys-156 each contribute to the Zn(2+) site. Lys-156 carries the N6-carboxylysine modification. Residue Tyr-161 coordinates substrate. The Zn(2+) site is built by His-189 and His-245. Ser-295 contacts substrate. Zn(2+) is bound at residue Asp-323. Asn-344 lines the substrate pocket.

It belongs to the metallo-dependent hydrolases superfamily. Hydantoinase/dihydropyrimidinase family. In terms of assembly, homotetramer. The cofactor is Zn(2+). Post-translationally, carboxylation allows a single lysine to coordinate two zinc ions.

It is found in the nucleus. The catalysed reaction is 5,6-dihydrouracil + H2O = 3-(carbamoylamino)propanoate + H(+). This is Dihydropyrimidinase 1 (dhp-1) from Caenorhabditis briggsae.